The primary structure comprises 612 residues: Baeyer-Villiger monooxygenase 4 (612 aa).

Residues glutamate 99, 107–110 (TWYW), aspartate 119, tyrosine 125, and alanine 169 contribute to the FAD site. 117 to 119 (QCD) serves as a coordination point for NADP(+). NADP(+) contacts are provided by residues 253-259 (TGATGVQ), 276-277 (RT), and 393-394 (KR).

The protein belongs to the FAD-binding monooxygenase family. Requires FAD as cofactor.

Catalyzes a Baeyer-Villiger oxidation reaction, i.e. the insertion of an oxygen atom into a carbon-carbon bond adjacent to a carbonyl, which converts ketones to esters or lactones using NADPH as an electron donor. Has a broad substrate scope and oxidizes different compounds including substituted and unsubstituted alicyclic, bicyclic-, aliphatic-ketones, ketones with an aromatic moiety, and sulfides. The highest activities are measured for 2- and 3-methylcyclohexanone, phenylacetone, bicyclo[3.2.0]hept-2-en-6-one and menthone. Cannot use NADH instead of NADPH. Is not active on benzaldehyde. This chain is Baeyer-Villiger monooxygenase 4, found in Dietzia sp. (strain D5).